Consider the following 178-residue polypeptide: Thymidine kinase (178 aa).

Residue 13 to 20 (GPMFAGKS) coordinates ATP. Catalysis depends on E85, which acts as the Proton acceptor. F115 lines the substrate pocket. Zn(2+) is bound by residues C140 and C143. Residue 159–163 (IEIIG) coordinates substrate. 2 residues coordinate Zn(2+): C172 and C175.

The protein belongs to the thymidine kinase family.

It carries out the reaction thymidine + ATP = dTMP + ADP + H(+). In Myxoma virus (strain Lausanne) (MYXV), this protein is Thymidine kinase (TK).